We begin with the raw amino-acid sequence, 239 residues long: Uridylate kinase (239 aa).

13-16 lines the ATP pocket; it reads KLSG. Glycine 55 serves as a coordination point for UMP. The ATP site is built by glycine 56 and arginine 60. UMP is bound by residues aspartate 75 and 136-143; that span reads TGNPFFTT. ATP-binding residues include threonine 163, asparagine 164, tyrosine 169, and aspartate 172.

It belongs to the UMP kinase family. Homohexamer.

It localises to the cytoplasm. The enzyme catalyses UMP + ATP = UDP + ADP. Its pathway is pyrimidine metabolism; CTP biosynthesis via de novo pathway; UDP from UMP (UMPK route): step 1/1. Inhibited by UTP. Catalyzes the reversible phosphorylation of UMP to UDP. This Neisseria meningitidis serogroup A / serotype 4A (strain DSM 15465 / Z2491) protein is Uridylate kinase.